A 670-amino-acid chain; its full sequence is Leiomodin-3 (670 aa).

Disordered regions lie at residues 34–72 (EMDDIAPDERVPVGLRQKDASHEMTVRDCTEPESEEEID), 94–120 (EIAPDERVPVGMRQRDQTDKPPTGSFD), 139–165 (EEERVPTTLLPSQKTNEEHEAKNEDKV), and 202–274 (EDKV…NWVP). 5 stretches are compositionally biased toward basic and acidic residues: residues 40 to 63 (PDERVPVGLRQKDASHEMTVRDCT), 97 to 112 (PDERVPVGMRQRDQTD), 153 to 163 (TNEEHEAKNED), 205 to 214 (VCDKPVKTDL), and 249 to 261 (TETKVNEEKKEDS). A coiled-coil region spans residues 150 to 183 (SQKTNEEHEAKNEDKVEELELVYEEIVEEVEGGQ). Positions 464-494 (DRQRQQRMEEQKLQQMKEQRKVMEMYEDSLN) form a coiled coil. Positions 517–556 (NGAEDIPEDSPEPSPQPSPPHQLCKTQHLAPQQHPPNLST) are disordered. The region spanning 637–656 (PRDHLLSEIRQSNVAYLKAV) is the WH2 domain.

The protein belongs to the tropomodulin family. In terms of tissue distribution, expressed in muscle (at protein level).

Its subcellular location is the cytoplasm. It is found in the myofibril. It localises to the sarcomere. The protein localises to the a band. The protein resides in the m line. Its subcellular location is the cytoskeleton. Functionally, essential for the organization of sarcomeric thin filaments in skeletal muscle. The polypeptide is Leiomodin-3 (Danio rerio (Zebrafish)).